Reading from the N-terminus, the 559-residue chain is Protein aurora borealis (559 aa).

The segment at M1–S27 is disordered. A phosphoserine mark is found at S183, S191, S270, S325, and S331. Position 354 is a phosphothreonine (T354).

Belongs to the BORA family. As to quaternary structure, interacts with AURKA. Phosphorylated by AURKA.

Its function is as follows. Required for the activation of AURKA at the onset of mitosis. The protein is Protein aurora borealis (BORA) of Homo sapiens (Human).